Consider the following 369-residue polypeptide: sn-glycerol-3-phosphate import ATP-binding protein UgpC 1 (369 aa).

The ABC transporter domain maps to 4–234 (ISIRGVKKNY…PVSRFVAGFV (231 aa)). 36-43 (GPSGCGKS) provides a ligand contact to ATP.

Belongs to the ABC transporter superfamily. sn-glycerol-3-phosphate importer (TC 3.A.1.1.3) family. As to quaternary structure, the complex is composed of two ATP-binding proteins (UgpC), two transmembrane proteins (UgpA and UgpE) and a solute-binding protein (UgpB).

It is found in the cell inner membrane. It catalyses the reaction sn-glycerol 3-phosphate(out) + ATP + H2O = sn-glycerol 3-phosphate(in) + ADP + phosphate + H(+). In terms of biological role, part of the ABC transporter complex UgpBAEC involved in sn-glycerol-3-phosphate (G3P) import. Responsible for energy coupling to the transport system. The protein is sn-glycerol-3-phosphate import ATP-binding protein UgpC 1 of Rhizobium johnstonii (strain DSM 114642 / LMG 32736 / 3841) (Rhizobium leguminosarum bv. viciae).